Reading from the N-terminus, the 567-residue chain is TNF receptor-associated factor 3 (567 aa).

Positions Met-1 to Gly-26 are disordered. Residue Cys-55 forms a Glycyl cysteine thioester (Cys-Gly) (interchain with G-Cter in ubiquitin) linkage. The segment at Cys-67 to Met-76 adopts an RING-type zinc-finger fold. Lys-106 participates in a covalent cross-link: Glycyl lysine isopeptide (Lys-Gly) (interchain with G-Cter in ubiquitin). Cys-123 is covalently cross-linked (Glycyl cysteine thioester (Cys-Gly) (interchain with G-Cter in ubiquitin)). 2 TRAF-type zinc fingers span residues Val-134–Gln-189 and Lys-190–Lys-248. Residues Lys-155 and Lys-167 each participate in a glycyl lysine isopeptide (Lys-Gly) (interchain with G-Cter in ubiquitin) cross-link. Positions Ser-266–Arg-337 form a coiled coil. Residue Lys-328 forms a Glycyl lysine isopeptide (Lys-Gly) (interchain with G-Cter in ubiquitin) linkage. Residues Asn-414–Val-559 enclose the MATH domain.

This sequence belongs to the TNF receptor-associated factor family. A subfamily. As to quaternary structure, homotrimer. Heterotrimer with TRAF2 and TRAF5. Interacts with LTBR/TNFRSF3, TNFRSF4, TNFRSF5/CD40, TNFRSF8/CD30, TNFRSF13C TNFRSF17/BCMA, TLR4 and EDAR. Interacts with MAP3K5, MAP3K14, TRAIP/TRIP, TDP2/TTRAP, TANK/ITRAF and TRAF3IP1. Interaction with TNFRSF5/CD40 is modulated by TANK/ITRAF, which competes for the same binding site. Interacts with TICAM1. Interacts with TRAFD1. Interacts with OTUB1, OTUB2 and OTUD5. Interacts with RNF216, OPTN and TBK1. Identified in a complex with TRAF2, MAP3K14 and BIRC3. Upon exposure to bacterial lipopolysaccharide (LPS), recruited to a transient complex containing TLR4, TRAF3, TRAF6, IKBKG, MAP3K7, MYD88, TICAM1, BIRC2, BIRC3 and UBE2N. Interacts (via RING-type zinc finger domain) with SRC. Interacts with CARD14. Interacts (via MATH domain) with PTPN22; the interaction promotes TRAF3 polyubiquitination. Interacts with MAVS. Directly interacts with DDX3X; this interaction stimulates TRAF3 'Lys-63' ubiquitination. Interacts with IRF3. Interacts with IKBKE in the course of viral infection. Interacts with TRIM35. Interacts with GAPDH; promoting TRAF3 ubiquitination. Interacts with PPP3CA and PPP3CB. Interacts with RALGDS. Interacts with FBXO11. In terms of processing, undergoes 'Lys-48'-linked polyubiquitination, leading to its proteasomal degradation in response to signaling by TNFSF13B, TLR4 or through CD40. 'Lys-48'-linked polyubiquitinated form is deubiquitinated by OTUD7B, preventing TRAF3 proteolysis and over-activation of non-canonical NF-kappa-B. Undergoes 'Lys-63'-linked ubiquitination during early stages of virus infection, and 'Lys-48'-linked ubiquitination during later stages. Undergoes both 'Lys-48'-linked and 'Lys-63'-linked ubiquitination in response to TLR3 and TLR4 signaling. 'Lys-63'-linked ubiquitination can be mediated by TRIM35. Deubiquitinated by OTUB1, OTUB2 and OTUD5. Undergoes 'Lys-63'-linked deubiquitination by MYSM1 to terminate the pattern-recognition receptors/PRRs pathways. Ubiquitinated at Lys-328 by the SCF(FBXL2) complex, leading to its degradation by the proteasome. Undergoes 'Lys-48'-linked polyubiquitination, leading to its proteasomal degradation in response to signaling by TNFSF13B, TLR4 or through CD40. 'Lys-48'-linked polyubiquitinated form is deubiquitinated by OTUD7B, preventing TRAF3 proteolysis and over-activation of non-canonical NF-kappa-B. Undergoes 'Lys-63'-linked ubiquitination during early stages of virus infection, and 'Lys-48'-linked ubiquitination during later stages. Undergoes both 'Lys-48'-linked and 'Lys-63'-linked ubiquitination in response to TLR3 and TLR4 signaling. 'Lys-63'-linked ubiquitination can be mediated by TRIM35. Deubiquitinated by OTUB1, OTUB2 and OTUD5. Undergoes 'Lys-63'-linked deubiquitination by MYSM1 to terminate the pattern-recognition receptors/PRRs pathways. Also undergoes 'Lys-29'-linked ubiquitination on Cys-55 and Cys-123 by NEDD4L; leading to increased 'Lys-48'- and 'Lys-63'-linked ubiquitination as well as increased binding to TBK1. TLR4 signals emanating from bacteria containing vesicles trigger 'Lys-33'-linked polyubiquitination that promotes the assembly of the exocyst complex thereby connecting innate immune signaling to the cellular trafficking apparatus. Deubiquitinated by USP25 during viral infection, leading to TRAF3 stabilization and type I interferon production. 'Lys-63'-linked ubiquitination by FBXO11 in a NEDD8-dependent manner promotes the amplification of IFN-I signaling. In terms of tissue distribution, detected in bone marrow macrophages and spleen B-cells (at protein level). In adult, highest in brain. Also found in kidney, heart, thymus, spleen, lung, muscle, testis and ovary. Not found in liver.

It is found in the cytoplasm. The protein resides in the endosome. It localises to the mitochondrion. It carries out the reaction S-ubiquitinyl-[E2 ubiquitin-conjugating enzyme]-L-cysteine + [acceptor protein]-L-lysine = [E2 ubiquitin-conjugating enzyme]-L-cysteine + N(6)-ubiquitinyl-[acceptor protein]-L-lysine.. Functionally, cytoplasmic E3 ubiquitin ligase that regulates various signaling pathways, such as the NF-kappa-B, mitogen-activated protein kinase (MAPK) and interferon regulatory factor (IRF) pathways, and thus controls a lot of biological processes in both immune and non-immune cell types. In TLR and RLR signaling pathways, acts as an E3 ubiquitin ligase promoting the synthesis of 'Lys-63'-linked polyubiquitin chains on several substrates such as ASC that lead to the activation of the type I interferon response or the inflammasome. Following the activation of certain TLRs such as TLR4, acts as a negative NF-kappa-B regulator, possibly to avoid unregulated inflammatory response, and its degradation via 'Lys-48'-linked polyubiquitination is required for MAPK activation and production of inflammatory cytokines. Alternatively, when TLR4 orchestrates bacterial expulsion, TRAF3 undergoes 'Lys-33'-linked polyubiquitination and subsequently binds to RALGDS, mobilizing the exocyst complex to rapidly expel intracellular bacteria back for clearance. Also acts as a constitutive negative regulator of the alternative NF-kappa-B pathway, which controls B-cell survival and lymphoid organ development. Required for normal antibody isotype switching from IgM to IgG. Plays a role T-cell dependent immune responses. Down-regulates proteolytic processing of NFKB2, and thereby inhibits non-canonical activation of NF-kappa-B. Promotes ubiquitination and proteasomal degradation of MAP3K14. The sequence is that of TNF receptor-associated factor 3 from Mus musculus (Mouse).